The following is a 269-amino-acid chain: Formamidopyrimidine-DNA glycosylase (269 aa).

The active-site Schiff-base intermediate with DNA is proline 2. Glutamate 3 serves as the catalytic Proton donor. The Proton donor; for beta-elimination activity role is filled by lysine 57. Residues histidine 90, arginine 109, and lysine 150 each coordinate DNA. An FPG-type zinc finger spans residues 235–269 (QVYGRKGEPCRVCGTPIVATKHAQRATFYCRHCQK). Arginine 259 functions as the Proton donor; for delta-elimination activity in the catalytic mechanism.

Belongs to the FPG family. In terms of assembly, monomer. The cofactor is Zn(2+).

The catalysed reaction is Hydrolysis of DNA containing ring-opened 7-methylguanine residues, releasing 2,6-diamino-4-hydroxy-5-(N-methyl)formamidopyrimidine.. The enzyme catalyses 2'-deoxyribonucleotide-(2'-deoxyribose 5'-phosphate)-2'-deoxyribonucleotide-DNA = a 3'-end 2'-deoxyribonucleotide-(2,3-dehydro-2,3-deoxyribose 5'-phosphate)-DNA + a 5'-end 5'-phospho-2'-deoxyribonucleoside-DNA + H(+). Involved in base excision repair of DNA damaged by oxidation or by mutagenic agents. Acts as a DNA glycosylase that recognizes and removes damaged bases. Has a preference for oxidized purines, such as 7,8-dihydro-8-oxoguanine (8-oxoG). Has AP (apurinic/apyrimidinic) lyase activity and introduces nicks in the DNA strand. Cleaves the DNA backbone by beta-delta elimination to generate a single-strand break at the site of the removed base with both 3'- and 5'-phosphates. This is Formamidopyrimidine-DNA glycosylase from Salmonella enteritidis PT4 (strain P125109).